Reading from the N-terminus, the 536-residue chain is Testis-specific protein 10-interacting protein (536 aa).

Disordered regions lie at residues 1 to 94 (MLNT…LFSS), 185 to 234 (SQGL…PGQG), and 246 to 305 (MEEE…FKGP). The span at 48 to 64 (SGDSLQSQSCQQQRSYS) shows a compositional bias: low complexity. Basic residues predominate over residues 71–83 (KERKPRRRNKKGR). Positions 375–451 (QAWEQQQLKE…LQGIQHRVQA (77 aa)) form a coiled coil. A disordered region spans residues 491–536 (GNAEGIPRKHRSYRSFGVEMESSPQSPPKTEPTSSQPGRHPSPTLD).

This Rattus norvegicus (Rat) protein is Testis-specific protein 10-interacting protein (Tsga10ip).